The primary structure comprises 341 residues: Ribosomal RNA small subunit methyltransferase H (341 aa).

S-adenosyl-L-methionine-binding positions include 47–49 (GGY), D64, F91, D109, and Q116.

Belongs to the methyltransferase superfamily. RsmH family.

The protein localises to the cytoplasm. The enzyme catalyses cytidine(1402) in 16S rRNA + S-adenosyl-L-methionine = N(4)-methylcytidine(1402) in 16S rRNA + S-adenosyl-L-homocysteine + H(+). Its function is as follows. Specifically methylates the N4 position of cytidine in position 1402 (C1402) of 16S rRNA. This chain is Ribosomal RNA small subunit methyltransferase H, found in Rhizobium leguminosarum bv. trifolii (strain WSM2304).